Reading from the N-terminus, the 363-residue chain is Tetraacyldisaccharide 4'-kinase (363 aa).

62-69 (RVGGTGKT) lines the ATP pocket.

This sequence belongs to the LpxK family.

It carries out the reaction a lipid A disaccharide + ATP = a lipid IVA + ADP + H(+). It participates in glycolipid biosynthesis; lipid IV(A) biosynthesis; lipid IV(A) from (3R)-3-hydroxytetradecanoyl-[acyl-carrier-protein] and UDP-N-acetyl-alpha-D-glucosamine: step 6/6. Its function is as follows. Transfers the gamma-phosphate of ATP to the 4'-position of a tetraacyldisaccharide 1-phosphate intermediate (termed DS-1-P) to form tetraacyldisaccharide 1,4'-bis-phosphate (lipid IVA). The chain is Tetraacyldisaccharide 4'-kinase from Polynucleobacter asymbioticus (strain DSM 18221 / CIP 109841 / QLW-P1DMWA-1) (Polynucleobacter necessarius subsp. asymbioticus).